A 227-amino-acid polypeptide reads, in one-letter code: Cytochrome c oxidase subunit 2 (227 aa).

Over 1–14 (MAYPVQLGFQDAAS) the chain is Mitochondrial intermembrane. The chain crosses the membrane as a helical span at residues 15 to 45 (PIMEELLYFHDHTLMIVFLISSLVLYIISLM). Over 46–59 (LTTKLMHTSTMDAQ) the chain is Mitochondrial matrix. Residues 60–87 (EVETVWTILPAIILILIALPSLRILYMM) traverse the membrane as a helical segment. Residues 88–227 (DEITTPSLTL…HFEEWLLSMF (140 aa)) lie on the Mitochondrial intermembrane side of the membrane. 6 residues coordinate Cu cation: His161, Cys196, Glu198, Cys200, His204, and Met207. Glu198 provides a ligand contact to Mg(2+).

This sequence belongs to the cytochrome c oxidase subunit 2 family. Component of the cytochrome c oxidase (complex IV, CIV), a multisubunit enzyme composed of 14 subunits. The complex is composed of a catalytic core of 3 subunits MT-CO1, MT-CO2 and MT-CO3, encoded in the mitochondrial DNA, and 11 supernumerary subunits COX4I, COX5A, COX5B, COX6A, COX6B, COX6C, COX7A, COX7B, COX7C, COX8 and NDUFA4, which are encoded in the nuclear genome. The complex exists as a monomer or a dimer and forms supercomplexes (SCs) in the inner mitochondrial membrane with NADH-ubiquinone oxidoreductase (complex I, CI) and ubiquinol-cytochrome c oxidoreductase (cytochrome b-c1 complex, complex III, CIII), resulting in different assemblies (supercomplex SCI(1)III(2)IV(1) and megacomplex MCI(2)III(2)IV(2)). Found in a complex with TMEM177, COA6, COX18, COX20, SCO1 and SCO2. Interacts with TMEM177 in a COX20-dependent manner. Interacts with COX20. Interacts with COX16. Cu cation serves as cofactor.

The protein localises to the mitochondrion inner membrane. The enzyme catalyses 4 Fe(II)-[cytochrome c] + O2 + 8 H(+)(in) = 4 Fe(III)-[cytochrome c] + 2 H2O + 4 H(+)(out). Component of the cytochrome c oxidase, the last enzyme in the mitochondrial electron transport chain which drives oxidative phosphorylation. The respiratory chain contains 3 multisubunit complexes succinate dehydrogenase (complex II, CII), ubiquinol-cytochrome c oxidoreductase (cytochrome b-c1 complex, complex III, CIII) and cytochrome c oxidase (complex IV, CIV), that cooperate to transfer electrons derived from NADH and succinate to molecular oxygen, creating an electrochemical gradient over the inner membrane that drives transmembrane transport and the ATP synthase. Cytochrome c oxidase is the component of the respiratory chain that catalyzes the reduction of oxygen to water. Electrons originating from reduced cytochrome c in the intermembrane space (IMS) are transferred via the dinuclear copper A center (CU(A)) of subunit 2 and heme A of subunit 1 to the active site in subunit 1, a binuclear center (BNC) formed by heme A3 and copper B (CU(B)). The BNC reduces molecular oxygen to 2 water molecules using 4 electrons from cytochrome c in the IMS and 4 protons from the mitochondrial matrix. The polypeptide is Cytochrome c oxidase subunit 2 (MT-CO2) (Propithecus tattersalli (Golden-crowned Sifaka)).